The primary structure comprises 136 residues: MAARRKARKRALEVLFEADQRGLAPLDVLKDKILRADPPVGEYAVTVVEGVVEHQARIDEVLSTYSMAWPLDRMPAVDRALLRIGTWEVLYAADVPDHVAVSEAVEIAQELSTDESPKFVNGLLARIAELKETLSA.

The protein belongs to the NusB family.

Functionally, involved in transcription antitermination. Required for transcription of ribosomal RNA (rRNA) genes. Binds specifically to the boxA antiterminator sequence of the ribosomal RNA (rrn) operons. The chain is Transcription antitermination protein NusB from Kineococcus radiotolerans (strain ATCC BAA-149 / DSM 14245 / SRS30216).